The following is a 226-amino-acid chain: Orotidine 5'-phosphate decarboxylase (226 aa).

Substrate contacts are provided by residues D8, K30, 58–67, T117, R177, Q186, G206, and R207; that span reads DLKIHDIPNT. K60 functions as the Proton donor in the catalytic mechanism.

This sequence belongs to the OMP decarboxylase family. Type 1 subfamily. As to quaternary structure, homodimer.

The enzyme catalyses orotidine 5'-phosphate + H(+) = UMP + CO2. The protein operates within pyrimidine metabolism; UMP biosynthesis via de novo pathway; UMP from orotate: step 2/2. Its function is as follows. Catalyzes the decarboxylation of orotidine 5'-monophosphate (OMP) to uridine 5'-monophosphate (UMP). The polypeptide is Orotidine 5'-phosphate decarboxylase (Campylobacter jejuni subsp. doylei (strain ATCC BAA-1458 / RM4099 / 269.97)).